A 262-amino-acid polypeptide reads, in one-letter code: Small ribosomal subunit protein uS2 (262 aa).

The disordered stretch occupies residues 240-262 (NLDEKEESQEAESTEENTTVESN). Over residues 243–254 (EKEESQEAESTE) the composition is skewed to acidic residues.

The protein belongs to the universal ribosomal protein uS2 family.

This chain is Small ribosomal subunit protein uS2, found in Staphylococcus haemolyticus (strain JCSC1435).